The primary structure comprises 294 residues: Syntaxin-19 (294 aa).

One can recognise a t-SNARE coiled-coil homology domain in the interval 209-271; sequence LSEIEQRHKE…NNTKEKFGLA (63 aa).

It belongs to the syntaxin family. As to quaternary structure, interacts with EGFR.

It is found in the cell membrane. It localises to the cytoplasm. Its function is as follows. Plays a role in endosomal trafficking of the epidermal growth factor receptor (EGFR). The sequence is that of Syntaxin-19 (STX19) from Homo sapiens (Human).